The primary structure comprises 179 residues: Insulin-like growth factor 2 (179 aa).

An N-terminal signal peptide occupies residues 1 to 24; it reads MGITAGKSMLALLAFLAFASCCYA. The interval 25–52 is b; sequence AYRPSETLCGGELVDTLQFVCGDRGFYF. 3 cysteine pairs are disulfide-bonded: C33/C71, C45/C84, and C70/C75. The tract at residues 53–64 is c; it reads SRPSSRINRRSR. The interval 65 to 85 is a; the sequence is GIVEECCFRSCDLALLETYCA. The d stretch occupies residues 86–91; sequence APAKSE. A propeptide spans 92–179 (e peptide); the sequence is RDVSASTTVL…GGASSEASSD (88 aa). O-linked (GalNAc...) threonine glycosylation occurs at T106. S154 carries O-linked (GalNAc...) serine glycosylation. The segment at 160 to 179 is disordered; the sequence is ALPTQDPATHGGASSEASSD. A glycan (O-linked (GalNAc...) threonine) is linked at T163.

Belongs to the insulin family. Interacts with MYORG; this interaction is required for IGF2 secretion. Interacts with integrins ITGAV:ITGB3 and ITGA6:ITGB4; integrin-binding is required for IGF2 signaling. Interacts with IGFBP2. Proteolytically processed by PCSK4, proIGF2 is cleaved at Arg-128 and Arg-92 to generate big-IGF2 and mature IGF2.

It is found in the secreted. The insulin-like growth factors possess growth-promoting activity. Major fetal growth hormone in mammals. Plays a key role in regulating fetoplacental development. IGF2 is influenced by placental lactogen. Also involved in tissue differentiation. In adults, involved in glucose metabolism in adipose tissue, skeletal muscle and liver. Acts as a ligand for integrin which is required for IGF2 signaling. Positively regulates myogenic transcription factor MYOD1 function by facilitating the recruitment of transcriptional coactivators, thereby controlling muscle terminal differentiation. Inhibits myoblast differentiation and modulates metabolism via increasing the mitochondrial respiration rate. Functionally, preptin undergoes glucose-mediated co-secretion with insulin, and acts as a physiological amplifier of glucose-mediated insulin secretion. Exhibits osteogenic properties by increasing osteoblast mitogenic activity through phosphoactivation of MAPK1 and MAPK3. The protein is Insulin-like growth factor 2 of Ovis aries (Sheep).